Reading from the N-terminus, the 299-residue chain is uncharacterized protein (299 aa).

Positions 1 to 44 (MSDSNLTNPIKAFFHDEFPEQYQEPPGLQKNMKPVPDCGEKSYK) are disordered. An NADP(+)-binding site is contributed by 55–79 (LVTGGDSGIGRAAAIAYAREGADVA). S188 is a binding site for substrate. The active-site Proton acceptor is the Y201.

The protein belongs to the short-chain dehydrogenases/reductases (SDR) family.

This is an uncharacterized protein from Bacillus subtilis (strain 168).